The chain runs to 310 residues: Alpha/beta hydrolase domain-containing protein 17A (310 aa).

Residues 38-61 (VPEPEPGPGGAGAAPSGPLRTSAA) form a disordered region. Residues S190, D255, and H284 each act as charge relay system in the active site. S307 bears the Phosphoserine mark.

The protein belongs to the AB hydrolase superfamily. ABHD17 family. Palmitoylated on cysteine residues located in a cysteine cluster at the N-terminus which promotes membrane localization. Palmitoylation is required for post-synaptic localization and for depalmitoylating activity towards DLG4/PSD95. As to expression, expressed in brain (at protein level). Expressed in hippocampal neurons.

It localises to the cell membrane. It is found in the recycling endosome membrane. The protein resides in the cell projection. The protein localises to the dendritic spine. Its subcellular location is the postsynaptic density membrane. The catalysed reaction is S-hexadecanoyl-L-cysteinyl-[protein] + H2O = L-cysteinyl-[protein] + hexadecanoate + H(+). Functionally, hydrolyzes fatty acids from S-acylated cysteine residues in proteins. Has depalmitoylating activity towards NRAS. Has depalmitoylating activity towards DLG4/PSD95. May have depalmitoylating activity towards MAP6. The protein is Alpha/beta hydrolase domain-containing protein 17A of Rattus norvegicus (Rat).